Here is a 1342-residue protein sequence, read N- to C-terminus: DNA-directed RNA polymerase subunit beta (1342 aa).

This sequence belongs to the RNA polymerase beta chain family. As to quaternary structure, the RNAP catalytic core consists of 2 alpha, 1 beta, 1 beta' and 1 omega subunit. When a sigma factor is associated with the core the holoenzyme is formed, which can initiate transcription.

The catalysed reaction is RNA(n) + a ribonucleoside 5'-triphosphate = RNA(n+1) + diphosphate. Functionally, DNA-dependent RNA polymerase catalyzes the transcription of DNA into RNA using the four ribonucleoside triphosphates as substrates. The chain is DNA-directed RNA polymerase subunit beta from Glaesserella parasuis serovar 5 (strain SH0165) (Haemophilus parasuis).